Consider the following 466-residue polypeptide: 23S rRNA (uracil(1939)-C(5))-methyltransferase RlmD (466 aa).

The TRAM domain occupies 1 to 54; that stretch reads MVDVLNIESLDLEARGIAHRDGKVLFVEGALPGERVTVQTVRRKPSYEIAKVEE. Cys-67, Cys-73, Cys-76, and Cys-155 together coordinate [4Fe-4S] cluster. Positions 264, 293, 298, 314, 342, and 363 each coordinate S-adenosyl-L-methionine. The active-site Nucleophile is Cys-393.

It belongs to the class I-like SAM-binding methyltransferase superfamily. RNA M5U methyltransferase family. RlmD subfamily.

The catalysed reaction is uridine(1939) in 23S rRNA + S-adenosyl-L-methionine = 5-methyluridine(1939) in 23S rRNA + S-adenosyl-L-homocysteine + H(+). In terms of biological role, catalyzes the formation of 5-methyl-uridine at position 1939 (m5U1939) in 23S rRNA. This chain is 23S rRNA (uracil(1939)-C(5))-methyltransferase RlmD, found in Bordetella parapertussis (strain 12822 / ATCC BAA-587 / NCTC 13253).